Reading from the N-terminus, the 1085-residue chain is DNA polymerase (1085 aa).

The tract at residues 1059–1085 is disordered; sequence YDQKRPNPRPQEPLLENPFWDDSSQTA.

The protein belongs to the DNA polymerase type-B family. As to quaternary structure, heterodimer with the terminal protein; this heterodimer binds to bp 9 to 18 of the genome. Forms a complex with viral pTP, DBP and hosts NFIA and POU2F1/OCT1 for initiation of replication.

The protein resides in the host nucleus. The enzyme catalyses DNA(n) + a 2'-deoxyribonucleoside 5'-triphosphate = DNA(n+1) + diphosphate. Eukaryotic-type DNA polymerase involved in viral genomic replication. DNA synthesis is protein primed, and acts in a strand displacement replication. Its function is as follows. Eukaryotic-type DNA polymerase involved in viral genomic replication. DNA synthesis is protein primed, and acts in a strand displacement replication. Assembles in complex with viral pTP, DBP, host NFIA and host POU2F1/OCT1 on viral origin of replication. The polymerase covalently transfers dCMP onto pTP, thereby initiating complementary strand synthesis. The protein is DNA polymerase of Pantherophis guttatus (Corn snake).